A 187-amino-acid polypeptide reads, in one-letter code: Ribosome-recycling factor (187 aa).

The protein belongs to the RRF family.

It is found in the cytoplasm. In terms of biological role, responsible for the release of ribosomes from messenger RNA at the termination of protein biosynthesis. May increase the efficiency of translation by recycling ribosomes from one round of translation to another. The chain is Ribosome-recycling factor from Petrotoga mobilis (strain DSM 10674 / SJ95).